Here is a 353-residue protein sequence, read N- to C-terminus: Phospho-furanose lactonase (353 aa).

Positions 25, 27, 153, 186, and 214 each coordinate Zn(2+). Lys153 carries the N6-carboxylysine modification. 244-245 (KY) provides a ligand contact to substrate. Asp272 provides a ligand contact to Zn(2+). 275–278 (RILY) is a binding site for substrate.

Belongs to the metallo-dependent hydrolases superfamily. Phosphotriesterase family. It depends on Zn(2+) as a cofactor.

The catalysed reaction is a 1,4-lactone + H2O = a 4-hydroxyacid + H(+). The enzyme catalyses D-xylono-1,4-lactone 5-phosphate + H2O = 5-phospho-D-xylonate + H(+). It catalyses the reaction L-arabino-1,4-lactone 5-phosphate + H2O = 5-phospho-L-arabinonate + H(+). Catalyzes the hydrolysis of D-xylono-1,4-lactone-5-phosphate and L-arabino-1,4-lactone-5-phosphate. Also able to hydrolyze carboxy 1,4-lactones. This chain is Phospho-furanose lactonase, found in Mycoplasmopsis agalactiae (strain NCTC 10123 / CIP 59.7 / PG2) (Mycoplasma agalactiae).